Here is a 317-residue protein sequence, read N- to C-terminus: Ribose-phosphate pyrophosphokinase (317 aa).

Residues 43 to 45 (DGE) and 102 to 103 (RQ) contribute to the ATP site. Lys-106 and Arg-110 together coordinate ADP. His-136 serves as a coordination point for Mg(2+). ADP is bound by residues Gln-141 and 149–150 (DH). Asp-175 lines the Mg(2+) pocket. The active site involves Lys-198. D-ribose 5-phosphate is bound by residues Arg-200, Asp-224, and 228-232 (DTAGT). 311 to 313 (SVS) provides a ligand contact to ADP.

It belongs to the ribose-phosphate pyrophosphokinase family. Class I subfamily. In terms of assembly, homohexamer; trimer of dimers. Requires Mg(2+) as cofactor.

It is found in the cytoplasm. It catalyses the reaction D-ribose 5-phosphate + ATP = 5-phospho-alpha-D-ribose 1-diphosphate + AMP + H(+). It participates in metabolic intermediate biosynthesis; 5-phospho-alpha-D-ribose 1-diphosphate biosynthesis; 5-phospho-alpha-D-ribose 1-diphosphate from D-ribose 5-phosphate (route I): step 1/1. Activated by inorganic phosphate, and to a lesser extent by sulfate ions. In addition to form a complex with ATP, Mg(2+) also acts as a cofactor. Strongly inhibited by ADP through competitive binding at the activation site and at a specific allosteric site. Less strongly inhibited by alpha,beta-methylene ATP (mADP), AMP, GDP, GMP and UTP. Its function is as follows. Involved in the biosynthesis of the central metabolite phospho-alpha-D-ribosyl-1-pyrophosphate (PRPP) via the transfer of pyrophosphoryl group from ATP to 1-hydroxyl of ribose-5-phosphate (Rib-5-P). The chain is Ribose-phosphate pyrophosphokinase from Bacillus subtilis (strain 168).